We begin with the raw amino-acid sequence, 1330 residues long: MEFYESTYFIVLIPSVVITVIFLFFWLFMKETLYDEVLAKQKREQKLIPTKTDKKKAEKKKNKKKEIQNGNLHESDSESVPRDFKLSDALAVEDEQVVPIPLNVVETSSSVRERKKKEKKHKPVLEEQVTKESDVSKIPGKKVEPVPVTKQPTPPSEAAASKKKPGQKKSKNGSDDQDKKVETLMAPSKKQESLPLQQETKQESGSGKKKVSSKKQKAENVLVDEPLIHATTYIPLMDNADSNPVLDKREVIDLIKPDQVEGIQKTGAKKLKTETDKENAEVKFKDFLLSLKTMMFSEDEALCVVDLLKEKSGVIQDALKRSSKGELTALVHQLQEKDKLLAAVKEDAAVMKDRCKQLTQEMMSEKERSNVVIARMKDRIGTLEKEHNVFQNKMHVSYQETQQMQMKFQQVREQMEAEIAHLKQENGILRDAVSNTTNQLESKQSAELNKLRQDYARLVNELTEKTGKLQQEEVQKKNAEQAVTQLKVQLQEAERRWEEVQSYIRKRTAEHEAAQQDLQSKFVAKENEVQSLHSKLTDTLVSKQQLEQRLMQLMESEQKRVTKEESLQMQVQDILEQNEALKALIQQFHSQIAAQTSASVLAEELHKVIAEKDKQIKQTEDSLANEHDHLTSKEEELKDIQNMNFLLKAEVQKLQALANEQAAAAHELEKMQKSIHVKDDQIRLLEEQLQCEISNKMEEFKILNDQNKALQLEVQKLQILVSEQPNKDVVEQMEKCIQEKDEKLKTVEELLETGLIQVATKEEELNAIRTENSSLTKEVQDLKAKQNDQVSFASLVEELKKVIHEKDGKIKSVEELLEAEVLKVANKEKTIQDLKQEIEALKEEIGNIQLEKAQQLSITSQIQELQNLLKGKEEQMNTMKTVLEEKEKDLASRGKWLQDLQEENESLKTHIQEVAQHNLKEACSASRLEELETVLKEKENEMKRIETILKERENDLSSKIKLLQEVQDENKLFKSEIEQLKQCNYQQASSFPPHEELLKVISEREKEITGLQNELDSLKEAVEHQRKKNNDLREKNWEAMEALASTEKMLQDKVNKTSKVERQQYVEAIELEAKEVLKKLFPKVSVPPNLNYGEWLRGFEKKPKECVAETSGSEEVKVLEHKLKEADEMHTLLQLECEKYKSVLAETEGILQKLQRSVEQEENKWKVKVDESQKTIKQMQLSFTSSEQELERLRRENKDIENLRREREHLEMELEKAEIERSTYVTEVRELKTQLNETLTKLRTEQSERQKVAGDLHKAQQSLDLIQSKIVKAAGDTTVIENSDVSPEAESSEKETMSVSLNQTVTQLQQLLQAVNQQLTKEKEHYQVLE.

Over 1 to 6 (MEFYES) the chain is Cytoplasmic. The helical; Signal-anchor for type II membrane protein transmembrane segment at 7–29 (TYFIVLIPSVVITVIFLFFWLFM) threads the bilayer. Residues 30 to 1330 (KETLYDEVLA…KEKEHYQVLE (1301 aa)) lie on the Lumenal side of the membrane. Disordered regions lie at residues 49-81 (PTKT…ESVP) and 108-218 (SSSV…KQKA). Ser75 and Ser77 each carry phosphoserine. Basic residues predominate over residues 113–122 (ERKKKEKKHK). The segment covering 123 to 135 (PVLEEQVTKESDV) has biased composition (basic and acidic residues). Position 153 is a phosphothreonine (Thr153). The residue at position 156 (Ser156) is a Phosphoserine. Over residues 161-171 (SKKKPGQKKSK) the composition is skewed to basic residues. N-linked (GlcNAc...) asparagine glycans are attached at residues Asn172, Asn435, Asn772, Asn904, and Asn1055. Positions 172 to 182 (NGSDDQDKKVE) are enriched in basic and acidic residues. Residues 332 to 1329 (HQLQEKDKLL…TKEKEHYQVL (998 aa)) adopt a coiled-coil conformation. Phosphoserine is present on Ser1085. An N-linked (GlcNAc...) asparagine glycan is attached at Asn1236. At Ser1286 the chain carries Phosphoserine. The N-linked (GlcNAc...) asparagine glycan is linked to Asn1302.

Belongs to the kinectin family. In terms of assembly, parallel homodimers formed between the membrane-bound and the cytosolic form, and also between 2 cytosolic forms. In terms of tissue distribution, expressed in male brain, heart, kidney, liver, lung, spleen and testis.

The protein resides in the endoplasmic reticulum membrane. Its function is as follows. Receptor for kinesin thus involved in kinesin-driven vesicle motility. This Vulpes vulpes (Red fox) protein is Kinectin (KTN1).